Here is a 950-residue protein sequence, read N- to C-terminus: Bifunctional glutamine synthetase adenylyltransferase/adenylyl-removing enzyme (950 aa).

Residues 1-440 (MLPLPSELQI…VFDHLIGDDA (440 aa)) are adenylyl removase. The tract at residues 449-950 (HGLYKSLWQD…KWLVAAPSDV (502 aa)) is adenylyl transferase.

It belongs to the GlnE family. The cofactor is Mg(2+).

It carries out the reaction [glutamine synthetase]-O(4)-(5'-adenylyl)-L-tyrosine + phosphate = [glutamine synthetase]-L-tyrosine + ADP. The catalysed reaction is [glutamine synthetase]-L-tyrosine + ATP = [glutamine synthetase]-O(4)-(5'-adenylyl)-L-tyrosine + diphosphate. Functionally, involved in the regulation of glutamine synthetase GlnA, a key enzyme in the process to assimilate ammonia. When cellular nitrogen levels are high, the C-terminal adenylyl transferase (AT) inactivates GlnA by covalent transfer of an adenylyl group from ATP to specific tyrosine residue of GlnA, thus reducing its activity. Conversely, when nitrogen levels are low, the N-terminal adenylyl removase (AR) activates GlnA by removing the adenylyl group by phosphorolysis, increasing its activity. The regulatory region of GlnE binds the signal transduction protein PII (GlnB) which indicates the nitrogen status of the cell. This is Bifunctional glutamine synthetase adenylyltransferase/adenylyl-removing enzyme from Yersinia enterocolitica serotype O:8 / biotype 1B (strain NCTC 13174 / 8081).